We begin with the raw amino-acid sequence, 84 residues long: Metallothionein-like protein 2C (84 aa).

It belongs to the metallothionein superfamily. Type 15 family.

It localises to the cytoplasm. It is found in the cytosol. In terms of biological role, metallothioneins have a high content of cysteine residues that bind various heavy metals. Acts as a reactive oxygen species (ROS) scavenger in the cytosol. Possesses superoxide anion and hydroxyl radical scavenging activities in vitro. Plays a role during root development, lateral root initiation and seed embryo germination, possibly by regulating levels of cytokinin. This Oryza sativa subsp. indica (Rice) protein is Metallothionein-like protein 2C (MT2C).